A 529-amino-acid polypeptide reads, in one-letter code: Non-reducing end alpha-L-arabinofuranosidase BoGH43B (529 aa).

The N-terminal stretch at 1–23 (MMKNSCRLLLILIGLWMANVSLA) is a signal peptide. D38 (proton acceptor) is an active-site residue. E198 acts as the Proton donor in catalysis.

It belongs to the glycosyl hydrolase 43 family.

Its subcellular location is the periplasm. It catalyses the reaction Hydrolysis of terminal non-reducing alpha-L-arabinofuranoside residues in alpha-L-arabinosides.. The protein operates within glucan metabolism; xyloglucan degradation. In terms of biological role, alpha-L-arabinofuranosidase involved in xyloglucan degradation by mediating the cleavage of terminal non-reducing alpha-L-arabinofuranoside residues in xyloglucan branches, converting the 'S' units to 'X' units. This is Non-reducing end alpha-L-arabinofuranosidase BoGH43B from Bacteroides ovatus (strain ATCC 8483 / DSM 1896 / JCM 5824 / BCRC 10623 / CCUG 4943 / NCTC 11153).